The primary structure comprises 202 residues: MIVKICGLKKAVDVAAAVENGADMIGFVFAKSKRQVTVDEAHELAKNIPAGVKKVGVFVNPTEEELTAAIKGVPLDIVQLHGQEPAEQANRTDAEVIKAFPVKDGKLPDNINDYPNAYILLDAPAEEYEGGSGKTFDWDKIDRDLLTKNKLIIAGGLNAQNVQEAIKRFEPYAVDISSGVETNGEKDPQKIKCFIKTAKGVE.

It belongs to the TrpF family.

It carries out the reaction N-(5-phospho-beta-D-ribosyl)anthranilate = 1-(2-carboxyphenylamino)-1-deoxy-D-ribulose 5-phosphate. The protein operates within amino-acid biosynthesis; L-tryptophan biosynthesis; L-tryptophan from chorismate: step 3/5. The protein is N-(5'-phosphoribosyl)anthranilate isomerase of Listeria monocytogenes serovar 1/2a (strain ATCC BAA-679 / EGD-e).